Reading from the N-terminus, the 398-residue chain is Phosphoglycerate kinase (398 aa).

Substrate-binding positions include 21–23 (DFN), R36, 59–62 (HLGR), R119, and R157. ATP contacts are provided by residues K208, G296, E327, and 354 to 357 (GGDS).

This sequence belongs to the phosphoglycerate kinase family. As to quaternary structure, monomer.

It localises to the cytoplasm. The catalysed reaction is (2R)-3-phosphoglycerate + ATP = (2R)-3-phospho-glyceroyl phosphate + ADP. Its pathway is carbohydrate degradation; glycolysis; pyruvate from D-glyceraldehyde 3-phosphate: step 2/5. In Streptococcus equi subsp. zooepidemicus (strain H70), this protein is Phosphoglycerate kinase.